Here is a 103-residue protein sequence, read N- to C-terminus: Large ribosomal subunit protein bL21 (103 aa).

This sequence belongs to the bacterial ribosomal protein bL21 family. As to quaternary structure, part of the 50S ribosomal subunit. Contacts protein L20.

Its function is as follows. This protein binds to 23S rRNA in the presence of protein L20. The sequence is that of Large ribosomal subunit protein bL21 from Herminiimonas arsenicoxydans.